The chain runs to 316 residues: Annexin D7 (316 aa).

N-acetylalanine is present on A2. Annexin repeat units follow at residues P11 to F82, E83 to S154, T166 to K237, and Y241 to G312. Ca(2+) is bound by residues F24, G26, G28, and E68. S95 carries the phosphoserine modification. Residues T100 and T112 each carry the phosphothreonine modification. Y129 carries the post-translational modification Phosphotyrosine. Ca(2+) contacts are provided by I254 and G258. Y283 carries the post-translational modification Phosphotyrosine. S288 is subject to Phosphoserine. Ca(2+) contacts are provided by D298, T299, and E304.

Belongs to the annexin (TC 1.A.31.1) family. Expressed in flowers.

This Arabidopsis thaliana (Mouse-ear cress) protein is Annexin D7 (ANNAT7).